Reading from the N-terminus, the 256-residue chain is Hydroxypyruvate/pyruvate aldolase (256 aa).

The active-site Proton acceptor is His48. Residues Glu152 and Asp178 each contribute to the a divalent metal cation site.

It belongs to the HpcH/HpaI aldolase family. The cofactor is a divalent metal cation.

It catalyses the reaction D-glyceraldehyde + pyruvate = 2-dehydro-3-deoxy-L-galactonate. Its function is as follows. Aldolase which can catalyze in vitro the aldolisation reaction between hydroxypyruvate (HPA) or pyruvate (PA) and D-glyceraldehyde (D-GA). The condensation of pyruvate and D-glyceraldehyde produces 2-dehydro-3-deoxy-L-galactonate as the major product. Has weak activity with hydroxypyruvate and D-glyceraldehyde. This is Hydroxypyruvate/pyruvate aldolase from Roseobacter denitrificans (strain ATCC 33942 / OCh 114) (Erythrobacter sp. (strain OCh 114)).